The following is a 244-amino-acid chain: DNA repair protein RecO (244 aa).

This sequence belongs to the RecO family.

Involved in DNA repair and RecF pathway recombination. The protein is DNA repair protein RecO of Polynucleobacter asymbioticus (strain DSM 18221 / CIP 109841 / QLW-P1DMWA-1) (Polynucleobacter necessarius subsp. asymbioticus).